The primary structure comprises 133 residues: Large ribosomal subunit protein bL17 (133 aa).

This sequence belongs to the bacterial ribosomal protein bL17 family. As to quaternary structure, part of the 50S ribosomal subunit. Contacts protein L32.

The protein is Large ribosomal subunit protein bL17 of Verminephrobacter eiseniae (strain EF01-2).